Reading from the N-terminus, the 158-residue chain is Cyclic pyranopterin monophosphate synthase (158 aa).

Residues 74–76 (MCH) and 112–113 (ME) contribute to the substrate site. Aspartate 127 is a catalytic residue.

It belongs to the MoaC family. Homohexamer; trimer of dimers.

The enzyme catalyses (8S)-3',8-cyclo-7,8-dihydroguanosine 5'-triphosphate = cyclic pyranopterin phosphate + diphosphate. The protein operates within cofactor biosynthesis; molybdopterin biosynthesis. Catalyzes the conversion of (8S)-3',8-cyclo-7,8-dihydroguanosine 5'-triphosphate to cyclic pyranopterin monophosphate (cPMP). This Helicobacter pylori (strain Shi470) protein is Cyclic pyranopterin monophosphate synthase.